A 602-amino-acid polypeptide reads, in one-letter code: Elongation factor 4 (602 aa).

Residues 7-189 (NNIRNFSIIA…RILTAVPPPQ (183 aa)) form the tr-type G domain. GTP is bound by residues 19-24 (DHGKST) and 136-139 (NKID).

It belongs to the TRAFAC class translation factor GTPase superfamily. Classic translation factor GTPase family. LepA subfamily.

The protein localises to the cell inner membrane. It catalyses the reaction GTP + H2O = GDP + phosphate + H(+). Functionally, required for accurate and efficient protein synthesis under certain stress conditions. May act as a fidelity factor of the translation reaction, by catalyzing a one-codon backward translocation of tRNAs on improperly translocated ribosomes. Back-translocation proceeds from a post-translocation (POST) complex to a pre-translocation (PRE) complex, thus giving elongation factor G a second chance to translocate the tRNAs correctly. Binds to ribosomes in a GTP-dependent manner. The sequence is that of Elongation factor 4 from Protochlamydia amoebophila (strain UWE25).